The chain runs to 149 residues: Large ribosomal subunit protein uL15 (149 aa).

Basic residues-rich tracts occupy residues 1-13 (MPTRLTKTRKHRG) and 21-42 (RIGKHRKHPGGRGKAGGQHHHR). The disordered stretch occupies residues 1–44 (MPTRLTKTRKHRGNVSAGKGRIGKHRKHPGGRGKAGGQHHHRTN).

It belongs to the universal ribosomal protein uL15 family. In terms of assembly, component of the large ribosomal subunit. Mature ribosomes consist of a small (40S) and a large (60S) subunit. The 40S subunit contains about 32 different proteins and 1 molecule of RNA (18S). The 60S subunit contains 45 different proteins and 3 molecules of RNA (25S, 5.8S and 5S).

It localises to the cytoplasm. Functionally, component of the ribosome, a large ribonucleoprotein complex responsible for the synthesis of proteins in the cell. The small ribosomal subunit (SSU) binds messenger RNAs (mRNAs) and translates the encoded message by selecting cognate aminoacyl-transfer RNA (tRNA) molecules. The large subunit (LSU) contains the ribosomal catalytic site termed the peptidyl transferase center (PTC), which catalyzes the formation of peptide bonds, thereby polymerizing the amino acids delivered by tRNAs into a polypeptide chain. The nascent polypeptides leave the ribosome through a tunnel in the LSU and interact with protein factors that function in enzymatic processing, targeting, and the membrane insertion of nascent chains at the exit of the ribosomal tunnel. The sequence is that of Large ribosomal subunit protein uL15 from Candida albicans (strain SC5314 / ATCC MYA-2876) (Yeast).